A 131-amino-acid polypeptide reads, in one-letter code: Hypocretin neuropeptide precursor (131 aa).

The first 33 residues, 1–33 (MNPPFAKVSWATVTLLLLLLLLPPAVLSPGAAA), serve as a signal peptide directing secretion. Residue Gln-34 is modified to Pyrrolidone carboxylic acid. 2 disulfides stabilise this stretch: Cys-39–Cys-45 and Cys-40–Cys-47. At Leu-66 the chain carries Leucine amide. Position 97 is a methionine amide (Met-97). Positions 98–131 (GRRAGAEPAPRLCPGRRCLAAAASSVAPGGRSGI) are cleaved as a propeptide — removed in mature form.

This sequence belongs to the orexin family. Specific enzymatic cleavages at paired basic residues yield the different active peptides.

The protein resides in the rough endoplasmic reticulum. It is found in the cytoplasmic vesicle. Its subcellular location is the synapse. Its function is as follows. Neuropeptides that play a significant role in the regulation of food intake and sleep-wakefulness, possibly by coordinating the complex behavioral and physiologic responses of these complementary homeostatic functions. A broader role in the homeostatic regulation of energy metabolism, autonomic function, hormonal balance and the regulation of body fluids, is also suggested. Functionally, binds to orexin receptors HCRTR1/OX1R and HCRTR2/OX2R with a high affinity. Stimulates food intake. Modulates pituitary luteinizing hormone secretion in an ovarian steroid-dependent manner. Binds to orexin receptor HCRTR2/OX2R only. Stimulates food intake. Modulates pituitary luteinizing hormone secretion in an ovarian steroid-dependent manner. This Sus scrofa (Pig) protein is Hypocretin neuropeptide precursor (HCRT).